The chain runs to 157 residues: SsrA-binding protein (157 aa).

This sequence belongs to the SmpB family.

The protein localises to the cytoplasm. Functionally, required for rescue of stalled ribosomes mediated by trans-translation. Binds to transfer-messenger RNA (tmRNA), required for stable association of tmRNA with ribosomes. tmRNA and SmpB together mimic tRNA shape, replacing the anticodon stem-loop with SmpB. tmRNA is encoded by the ssrA gene; the 2 termini fold to resemble tRNA(Ala) and it encodes a 'tag peptide', a short internal open reading frame. During trans-translation Ala-aminoacylated tmRNA acts like a tRNA, entering the A-site of stalled ribosomes, displacing the stalled mRNA. The ribosome then switches to translate the ORF on the tmRNA; the nascent peptide is terminated with the 'tag peptide' encoded by the tmRNA and targeted for degradation. The ribosome is freed to recommence translation, which seems to be the essential function of trans-translation. The chain is SsrA-binding protein from Limosilactobacillus reuteri (strain DSM 20016) (Lactobacillus reuteri).